The chain runs to 513 residues: Pleiotropic regulator 1 (513 aa).

M1 bears the N-acetylmethionine mark. Residues 60 to 79 (TSKENLKEKGPQNATDSYPH) form a disordered region. Position 119 is a phosphoserine (S119). The interval 136-160 (VDANRTGPAGSEYRHPGASDRSQPT) is disordered. At S200 the chain carries Phosphoserine. 7 WD repeats span residues 201–240 (GHLG…LKLS), 243–282 (GHIS…VIRH), 285–324 (GHLS…SVHT), 327–366 (GHTN…TRVT), 369–409 (NHKK…QNLS), 410–448 (GHNA…NFQR), and 459–498 (DSES…TEET). S390 carries the post-translational modification Phosphoserine.

This sequence belongs to the WD repeat PRL1/PRL2 family. In terms of assembly, identified in the spliceosome C complex. Component of the PRP19-CDC5L splicing complex composed of a core complex comprising a homotetramer of PRPF19, CDC5L, PLRG1 and BCAS2, and at least three less stably associated proteins CTNNBL1, CWC15 and HSPA8. Interacts (via its WD40 repeat domain) directly with CDC5L (via its C-terminal); the interaction is required for mRNA splicing but not for spliceosome assembly. Component of the minor spliceosome, which splices U12-type introns. Within this complex, interacts with CRIPT. Also interacts directly in the complex with BCAS2 and PRPF19. Interacts with USB1.

The protein localises to the nucleus. It is found in the nucleus speckle. In terms of biological role, involved in pre-mRNA splicing as component of the spliceosome. Component of the PRP19-CDC5L complex that forms an integral part of the spliceosome and is required for activating pre-mRNA splicing. As a component of the minor spliceosome, involved in the splicing of U12-type introns in pre-mRNAs. The chain is Pleiotropic regulator 1 (Plrg1) from Mus musculus (Mouse).